Here is a 458-residue protein sequence, read N- to C-terminus: Elongation factor 1-alpha (458 aa).

A N,N,N-trimethylglycine modification is found at Gly2. Residue Lys3 is modified to N6,N6-dimethyllysine; alternate. Lys3 bears the N6-methyllysine; alternate mark. The tr-type G domain occupies 5–240 (KTHVNVVVIG…DAIEPPVRPS (236 aa)). Residues 14–21 (GHVDSGKS) are G1. Residue 14-21 (GHVDSGKS) participates in GTP binding. N6-methyllysine is present on Lys30. The G2 stretch occupies residues 70–74 (GITID). At Lys79 the chain carries N6,N6,N6-trimethyllysine. The interval 91–94 (DAPG) is G3. GTP-binding positions include 91 to 95 (DAPGH) and 153 to 156 (NKMD). The segment at 153 to 156 (NKMD) is G4. The tract at residues 192-194 (SGW) is G5. At Lys316 the chain carries N6,N6-dimethyllysine; alternate. An N6-methyllysine; alternate modification is found at Lys316. Residue Lys390 is modified to N6-methyllysine.

Belongs to the TRAFAC class translation factor GTPase superfamily. Classic translation factor GTPase family. EF-Tu/EF-1A subfamily.

The protein resides in the cytoplasm. In terms of biological role, this protein promotes the GTP-dependent binding of aminoacyl-tRNA to the A-site of ribosomes during protein biosynthesis. This Mucor circinelloides f. lusitanicus (Mucor racemosus var. lusitanicus) protein is Elongation factor 1-alpha (TEF-1).